The following is a 923-amino-acid chain: Alanine--tRNA ligase (923 aa).

Zn(2+) contacts are provided by His611, His615, Cys714, and His718.

The protein belongs to the class-II aminoacyl-tRNA synthetase family. The cofactor is Zn(2+).

The protein localises to the cytoplasm. The enzyme catalyses tRNA(Ala) + L-alanine + ATP = L-alanyl-tRNA(Ala) + AMP + diphosphate. Catalyzes the attachment of alanine to tRNA(Ala) in a two-step reaction: alanine is first activated by ATP to form Ala-AMP and then transferred to the acceptor end of tRNA(Ala). Also edits incorrectly charged Ser-tRNA(Ala) and Gly-tRNA(Ala) via its editing domain. This chain is Alanine--tRNA ligase, found in Methanosarcina barkeri (strain Fusaro / DSM 804).